The following is a 446-amino-acid chain: 3-phosphoshikimate 1-carboxyvinyltransferase (446 aa).

The segment at 1 to 20 (MIMAKPLSSRRAAPLAGSAP) is disordered. Lys-25, Ser-26, and Arg-30 together coordinate 3-phosphoshikimate. A phosphoenolpyruvate-binding site is contributed by Lys-25. Phosphoenolpyruvate is bound by residues Gly-98 and Arg-126. Residues Ser-171, Gln-173, Asp-324, and Lys-351 each contribute to the 3-phosphoshikimate site. Gln-173 provides a ligand contact to phosphoenolpyruvate. Asp-324 acts as the Proton acceptor in catalysis. Phosphoenolpyruvate-binding residues include Arg-355 and Arg-399.

It belongs to the EPSP synthase family. As to quaternary structure, monomer.

The protein resides in the cytoplasm. It carries out the reaction 3-phosphoshikimate + phosphoenolpyruvate = 5-O-(1-carboxyvinyl)-3-phosphoshikimate + phosphate. Its pathway is metabolic intermediate biosynthesis; chorismate biosynthesis; chorismate from D-erythrose 4-phosphate and phosphoenolpyruvate: step 6/7. Functionally, catalyzes the transfer of the enolpyruvyl moiety of phosphoenolpyruvate (PEP) to the 5-hydroxyl of shikimate-3-phosphate (S3P) to produce enolpyruvyl shikimate-3-phosphate and inorganic phosphate. The sequence is that of 3-phosphoshikimate 1-carboxyvinyltransferase from Paramagnetospirillum magneticum (strain ATCC 700264 / AMB-1) (Magnetospirillum magneticum).